Reading from the N-terminus, the 311-residue chain is MANPLYHKHIISINDLSREDLELVLRTAASLKANPQPELLKHKVIASCFFEASTRTRLSFETSMHRLGASVVGFADGSNTSLGKKGETLADTISVIGTYVDAIVMRHPQEGAARLATEFSGGIPVLNAGDGANQHPTQTLLDLFTIQETQGRLNNINIAMVGDLKYGRTVHSLAQALAKFEGNRFFFIAPDALAMPAYILQMLEEKGIQYSLHSSIEEVVPELDILYMTRVQKERLDPSEYANVKAQFVLRAADLAGARDNLKVLHPLPRIDEITTDVDKTPYAYYFQQAGNGIFARQALLALVLNADLAL.

2 residues coordinate carbamoyl phosphate: Arg-55 and Thr-56. Residue Lys-85 coordinates L-aspartate. Residues Arg-106, His-135, and Gln-138 each coordinate carbamoyl phosphate. Arg-168 and Arg-230 together coordinate L-aspartate. Positions 268 and 269 each coordinate carbamoyl phosphate.

This sequence belongs to the aspartate/ornithine carbamoyltransferase superfamily. ATCase family. In terms of assembly, heterododecamer (2C3:3R2) of six catalytic PyrB chains organized as two trimers (C3), and six regulatory PyrI chains organized as three dimers (R2).

The enzyme catalyses carbamoyl phosphate + L-aspartate = N-carbamoyl-L-aspartate + phosphate + H(+). Its pathway is pyrimidine metabolism; UMP biosynthesis via de novo pathway; (S)-dihydroorotate from bicarbonate: step 2/3. In terms of biological role, catalyzes the condensation of carbamoyl phosphate and aspartate to form carbamoyl aspartate and inorganic phosphate, the committed step in the de novo pyrimidine nucleotide biosynthesis pathway. In Serratia proteamaculans (strain 568), this protein is Aspartate carbamoyltransferase catalytic subunit.